A 478-amino-acid chain; its full sequence is Cytochrome c-552 (478 aa).

An N-terminal signal peptide occupies residues 1 to 27 (MKKQWTRRSAAAIAMVTTLLLSSHSFA). Histidine 91 contacts heme c. Positions 119, 122, and 123 each coordinate heme. Heme c contacts are provided by cysteine 157, cysteine 160, histidine 161, cysteine 206, cysteine 209, and histidine 210. The Ca(2+) site is built by glutamate 212, tyrosine 213, lysine 258, and glutamine 260. Tyrosine 213 lines the substrate pocket. Histidine 261 is a binding site for substrate. Histidine 272, cysteine 279, cysteine 282, histidine 283, histidine 298, cysteine 311, cysteine 314, histidine 315, and histidine 390 together coordinate heme c.

This sequence belongs to the cytochrome c-552 family. Ca(2+) serves as cofactor. Heme c is required as a cofactor.

Its subcellular location is the periplasm. It catalyses the reaction 6 Fe(III)-[cytochrome c] + NH4(+) + 2 H2O = 6 Fe(II)-[cytochrome c] + nitrite + 8 H(+). Its pathway is nitrogen metabolism; nitrate reduction (assimilation). Its function is as follows. Catalyzes the reduction of nitrite to ammonia, consuming six electrons in the process. The chain is Cytochrome c-552 from Aliivibrio fischeri (strain ATCC 700601 / ES114) (Vibrio fischeri).